Reading from the N-terminus, the 1336-residue chain is Immunoglobulin superfamily member 1 (1336 aa).

An N-terminal signal peptide occupies residues 1 to 28 (MTLDRPGEGATMLKTFTVLLFCIRMSLG). Topologically, residues 29–518 (MTSIVMDPQP…GYLTWNYVLN (490 aa)) are extracellular. 5 consecutive Ig-like C2-type domains span residues 38-122 (PELW…KVLE), 137-222 (QAET…LVVA), 226-312 (PKPT…SDVL), 321-408 (PKTW…PSHN), and 419-500 (PKPS…HRSE). Residue N53 is glycosylated (N-linked (GlcNAc...) asparagine). C58 and C106 form a disulfide bridge. C248 and C296 are oxidised to a cystine. Residues N338, N374, and N381 are each glycosylated (N-linked (GlcNAc...) asparagine). Cystine bridges form between C343–C392 and C441–C484. Residues 519–539 (EAIRLSLIMQLVALLLVVLWI) form a helical membrane-spanning segment. Over 540–559 (RWKCRRLRIREAWLLGTAQG) the chain is Cytoplasmic. A helical membrane pass occupies residues 560–580 (VTMLFIVTALLCCGLCNGVLI). Residues 581–1336 (EETEIVMPTP…RISVELPVPI (756 aa)) are Extracellular-facing. Ig-like C2-type domains lie at 589–677 (TPKP…ALEL), 686–760 (PVIS…RPFK), 777–869 (PKPF…LVVT), 873–958 (PKPT…YLSM), 965–1060 (TDTF…ELLV), 1065–1150 (PKPS…NHSD), and 1161–1242 (PKPS…EPSD). N-linked (GlcNAc...) asparagine glycosylation is found at N607, N747, N798, N846, N939, N986, N1027, and N1082. C703 and C750 are disulfide-bonded. 2 cysteine pairs are disulfide-bonded: C799-C849 and C895-C942. Cysteines 1087 and 1134 form a disulfide. N-linked (GlcNAc...) asparagine glycans are attached at residues N1147 and N1223. A disulfide bond links C1183 and C1226. Positions 1308–1336 (CNQEGEPGTPANSPSSTSQRISVELPVPI) are disordered. Over residues 1317 to 1328 (PANSPSSTSQRI) the composition is skewed to polar residues.

As to quaternary structure, interacts with INHA. In PubMed:12385827 does not interact with INHA; standard receptor binding assay. Interacts with ACVR1B; the interaction appears to be ligand-dependent as it is diminished by inhibin B and activin A. Interacts with ACVR2A, ACVR2B, ACVRL1 and BMPR1B. Interacts with HECTD1. In terms of tissue distribution, highly expressed in pancreas, testis and fetal liver. Moderately expressed in heart, prostate and small intestine. Expressed at very low levels in brain, thymus, ovary, colon, fetal lung and fetal kidney. Expressed in muscle. Isoform 3 is expressed in pituitary gland.

It localises to the membrane. The protein localises to the secreted. Seems to be a coreceptor in inhibin signaling, but seems not to be a high-affinity inhibin receptor. Antagonizes activin A signaling in the presence or absence of inhibin B. Necessary to mediate a specific antagonistic effect of inhibin B on activin-stimulated transcription. The sequence is that of Immunoglobulin superfamily member 1 (IGSF1) from Homo sapiens (Human).